Here is a 374-residue protein sequence, read N- to C-terminus: uncharacterized protein (374 aa).

6 residues coordinate a divalent metal cation: D158, H160, D190, N221, H312, and H314.

The protein belongs to the metallophosphoesterase superfamily. Requires a divalent metal cation as cofactor.

This is an uncharacterized protein from Campylobacter jejuni subsp. jejuni serotype O:2 (strain ATCC 700819 / NCTC 11168).